Here is a 296-residue protein sequence, read N- to C-terminus: Phosphatidylserine decarboxylase proenzyme (296 aa).

Residues Asp-113, His-169, and Ser-256 each act as charge relay system; for autoendoproteolytic cleavage activity in the active site. Residue Ser-256 is the Schiff-base intermediate with substrate; via pyruvic acid; for decarboxylase activity of the active site. Ser-256 carries the post-translational modification Pyruvic acid (Ser); by autocatalysis.

The protein belongs to the phosphatidylserine decarboxylase family. PSD-B subfamily. Prokaryotic type II sub-subfamily. Heterodimer of a large membrane-associated beta subunit and a small pyruvoyl-containing alpha subunit. It depends on pyruvate as a cofactor. In terms of processing, is synthesized initially as an inactive proenzyme. Formation of the active enzyme involves a self-maturation process in which the active site pyruvoyl group is generated from an internal serine residue via an autocatalytic post-translational modification. Two non-identical subunits are generated from the proenzyme in this reaction, and the pyruvate is formed at the N-terminus of the alpha chain, which is derived from the carboxyl end of the proenzyme. The autoendoproteolytic cleavage occurs by a canonical serine protease mechanism, in which the side chain hydroxyl group of the serine supplies its oxygen atom to form the C-terminus of the beta chain, while the remainder of the serine residue undergoes an oxidative deamination to produce ammonia and the pyruvoyl prosthetic group on the alpha chain. During this reaction, the Ser that is part of the protease active site of the proenzyme becomes the pyruvoyl prosthetic group, which constitutes an essential element of the active site of the mature decarboxylase.

It is found in the cell membrane. It carries out the reaction a 1,2-diacyl-sn-glycero-3-phospho-L-serine + H(+) = a 1,2-diacyl-sn-glycero-3-phosphoethanolamine + CO2. Its pathway is phospholipid metabolism; phosphatidylethanolamine biosynthesis; phosphatidylethanolamine from CDP-diacylglycerol: step 2/2. Its function is as follows. Catalyzes the formation of phosphatidylethanolamine (PtdEtn) from phosphatidylserine (PtdSer). The protein is Phosphatidylserine decarboxylase proenzyme of Clostridium botulinum (strain Eklund 17B / Type B).